Here is a 364-residue protein sequence, read N- to C-terminus: Methylthioribose-1-phosphate isomerase (364 aa).

Substrate-binding positions include 49 to 51 (RGA), Arg-89, and Gln-201. Residue Asp-242 is the Proton donor of the active site. Position 252 to 253 (252 to 253 (NK)) interacts with substrate.

The protein belongs to the eIF-2B alpha/beta/delta subunits family. MtnA subfamily.

The enzyme catalyses 5-(methylsulfanyl)-alpha-D-ribose 1-phosphate = 5-(methylsulfanyl)-D-ribulose 1-phosphate. The protein operates within amino-acid biosynthesis; L-methionine biosynthesis via salvage pathway; L-methionine from S-methyl-5-thio-alpha-D-ribose 1-phosphate: step 1/6. Its function is as follows. Catalyzes the interconversion of methylthioribose-1-phosphate (MTR-1-P) into methylthioribulose-1-phosphate (MTRu-1-P). In Leptospira interrogans serogroup Icterohaemorrhagiae serovar copenhageni (strain Fiocruz L1-130), this protein is Methylthioribose-1-phosphate isomerase.